The following is a 131-amino-acid chain: Transcription antitermination protein NusB (131 aa).

Belongs to the NusB family.

In terms of biological role, involved in transcription antitermination. Required for transcription of ribosomal RNA (rRNA) genes. Binds specifically to the boxA antiterminator sequence of the ribosomal RNA (rrn) operons. In Ligilactobacillus salivarius (strain UCC118) (Lactobacillus salivarius), this protein is Transcription antitermination protein NusB.